The sequence spans 96 residues: Protein RnfH (96 aa).

This sequence belongs to the UPF0125 (RnfH) family.

The polypeptide is Protein RnfH (Escherichia coli O17:K52:H18 (strain UMN026 / ExPEC)).